The following is a 331-amino-acid chain: Mucin-15 (331 aa).

Residues 1–22 (MLTLAKIALISSLFISLPFARP) form the signal peptide. Residues 23 to 233 (QKQNPRRNVT…SDTPKENKNT (211 aa)) are Extracellular-facing. Residues Asn30, Asn44, Asn54, Asn59, Asn75, Asn84, Asn120, Asn136, Asn145, Asn152, Asn215, and Asn222 are each glycosylated (N-linked (GlcNAc...) asparagine). Residues 124 to 162 (ADANPLQVSEHSNSTNSPSPENFTWSLDNDTMNSPEDIS) show a composition bias toward polar residues. The tract at residues 124 to 186 (ADANPLQVSE…VTPFTAEPTE (63 aa)) is disordered. A helical membrane pass occupies residues 234 to 254 (GIVFGAILGAILGASLLSLVG). Residues 255–331 (YLLCGQRKTD…DAIPPLRPSI (77 aa)) lie on the Cytoplasmic side of the membrane. A disordered region spans residues 302–331 (AVSDSSMPEGGESLQDGIPMDAIPPLRPSI).

In terms of processing, highly glycosylated (N- and O-linked carbohydrates).

Its subcellular location is the membrane. This is Mucin-15 (Muc15) from Mus musculus (Mouse).